The sequence spans 265 residues: Chalcone synthase (265 aa).

C40 is an active-site residue.

Belongs to the thiolase-like superfamily. Chalcone/stilbene synthases family.

It catalyses the reaction (E)-4-coumaroyl-CoA + 3 malonyl-CoA + 3 H(+) = 2',4,4',6'-tetrahydroxychalcone + 3 CO2 + 4 CoA. It participates in secondary metabolite biosynthesis; flavonoid biosynthesis. The primary product of this enzyme is 4,2',4',6'-tetrahydroxychalcone (also termed naringenin-chalcone or chalcone) which can under specific conditions spontaneously isomerize into naringenin. This chain is Chalcone synthase (CHSII), found in Medicago sativa (Alfalfa).